The following is a 335-amino-acid chain: tRNA N6-adenosine threonylcarbamoyltransferase (335 aa).

Fe cation-binding residues include H110 and H114. Residues 132–136 (LVSGG), D165, G178, and N271 each bind substrate. Residue D299 coordinates Fe cation.

It belongs to the KAE1 / TsaD family. Fe(2+) serves as cofactor.

Its subcellular location is the cytoplasm. It catalyses the reaction L-threonylcarbamoyladenylate + adenosine(37) in tRNA = N(6)-L-threonylcarbamoyladenosine(37) in tRNA + AMP + H(+). Functionally, required for the formation of a threonylcarbamoyl group on adenosine at position 37 (t(6)A37) in tRNAs that read codons beginning with adenine. Is involved in the transfer of the threonylcarbamoyl moiety of threonylcarbamoyl-AMP (TC-AMP) to the N6 group of A37, together with TsaE and TsaB. TsaD likely plays a direct catalytic role in this reaction. The protein is tRNA N6-adenosine threonylcarbamoyltransferase of Campylobacter jejuni subsp. jejuni serotype O:23/36 (strain 81-176).